A 397-amino-acid polypeptide reads, in one-letter code: MAKDVFSVAIFFIVLRETLEASIIVSVLMSFISQTLMDKDGNVTDPKLKRKFMLQVWIGSFTALFICLAIGGGFIGAFYALDKDIWSGSEEIWEGVFSLIAVVLITVMGFAMLRVSHLQEKWRKKLMKSIANRKAKGISNWGKKYSMFLLPFFTVLREGLEVVVFVGGVGLETPATAFPLPVICGLIVGCLIGYFIYRGGNVMNLQWFLIASTCILYLISAGLMSKATFYFEMNKWNHQTGGDAGELGDGPGSYPFKSAVWHVNYGNPEMNSNGGYMIFNAILGWNNTGTYGSILSYIIYWLFVAFIMFLMWYKERRAARLLIAKLGDKVVDLEAASSHTPVQSSSSEDEFKINSPTDDKGDKAIDIVTEVRESSSPVEEHKDDKTVDVINEIRESH.

A run of 4 helical transmembrane segments spans residues 61-81 (FTALFICLAIGGGFIGAFYAL), 92-112 (IWEGVFSLIAVVLITVMGFAM), 177-197 (AFPLPVICGLIVGCLIGYFIY), and 292-312 (GSILSYIIYWLFVAFIMFLMW). A phosphoserine mark is found at Ser-337 and Ser-338. Residues 337-346 (SSHTPVQSSS) show a composition bias toward polar residues. Positions 337 to 364 (SSHTPVQSSSSEDEFKINSPTDDKGDKA) are disordered. Residue Thr-340 is modified to Phosphothreonine. Phosphoserine occurs at positions 346, 347, and 355. Over residues 349-364 (DEFKINSPTDDKGDKA) the composition is skewed to basic and acidic residues. The residue at position 357 (Thr-357) is a Phosphothreonine. Phosphoserine occurs at positions 374, 375, and 376.

Belongs to the oxidase-dependent Fe transporter (OFeT) (TC 9.A.10.1) family.

The protein localises to the membrane. Its function is as follows. Permease for high affinity iron uptake. In Schizosaccharomyces pombe (strain 972 / ATCC 24843) (Fission yeast), this protein is Plasma membrane iron permease (fip1).